The primary structure comprises 378 residues: Queuine tRNA-ribosyltransferase (378 aa).

D91 serves as the catalytic Proton acceptor. Substrate contacts are provided by residues D91–F95, D145, Q189, and G216. An RNA binding region spans residues G247 to D253. The active-site Nucleophile is the D266. Residues T271–R275 are RNA binding; important for wobble base 34 recognition. C304, C306, C309, and H335 together coordinate Zn(2+).

The protein belongs to the queuine tRNA-ribosyltransferase family. Homodimer. Within each dimer, one monomer is responsible for RNA recognition and catalysis, while the other monomer binds to the replacement base PreQ1. It depends on Zn(2+) as a cofactor.

It catalyses the reaction 7-aminomethyl-7-carbaguanine + guanosine(34) in tRNA = 7-aminomethyl-7-carbaguanosine(34) in tRNA + guanine. It functions in the pathway tRNA modification; tRNA-queuosine biosynthesis. Catalyzes the base-exchange of a guanine (G) residue with the queuine precursor 7-aminomethyl-7-deazaguanine (PreQ1) at position 34 (anticodon wobble position) in tRNAs with GU(N) anticodons (tRNA-Asp, -Asn, -His and -Tyr). Catalysis occurs through a double-displacement mechanism. The nucleophile active site attacks the C1' of nucleotide 34 to detach the guanine base from the RNA, forming a covalent enzyme-RNA intermediate. The proton acceptor active site deprotonates the incoming PreQ1, allowing a nucleophilic attack on the C1' of the ribose to form the product. After dissociation, two additional enzymatic reactions on the tRNA convert PreQ1 to queuine (Q), resulting in the hypermodified nucleoside queuosine (7-(((4,5-cis-dihydroxy-2-cyclopenten-1-yl)amino)methyl)-7-deazaguanosine). This chain is Queuine tRNA-ribosyltransferase, found in Vibrio vulnificus (strain CMCP6).